The sequence spans 82 residues: Exodeoxyribonuclease 7 small subunit (82 aa).

Belongs to the XseB family. In terms of assembly, heterooligomer composed of large and small subunits.

The protein localises to the cytoplasm. The catalysed reaction is Exonucleolytic cleavage in either 5'- to 3'- or 3'- to 5'-direction to yield nucleoside 5'-phosphates.. Its function is as follows. Bidirectionally degrades single-stranded DNA into large acid-insoluble oligonucleotides, which are then degraded further into small acid-soluble oligonucleotides. In Sodalis glossinidius (strain morsitans), this protein is Exodeoxyribonuclease 7 small subunit.